We begin with the raw amino-acid sequence, 564 residues long: Formate--tetrahydrofolate ligase (564 aa).

69-76 (TPAGEGKS) serves as a coordination point for ATP.

Belongs to the formate--tetrahydrofolate ligase family.

The enzyme catalyses (6S)-5,6,7,8-tetrahydrofolate + formate + ATP = (6R)-10-formyltetrahydrofolate + ADP + phosphate. It participates in one-carbon metabolism; tetrahydrofolate interconversion. This is Formate--tetrahydrofolate ligase from Renibacterium salmoninarum (strain ATCC 33209 / DSM 20767 / JCM 11484 / NBRC 15589 / NCIMB 2235).